The chain runs to 378 residues: Nucleosome assembly protein 1;1 (378 aa).

A coiled-coil region spans residues 33 to 87 (VNALKDKLQSLAGQHTDVLEALSPNVRKRVEYLREIQGQHDEIELKFFEERAALE). The short motif at 54–69 (LSPNVRKRVEYLREIQ) is the Nuclear export signal element. Positions 230-235 (KKKPKK) match the Nuclear localization signal motif. The tract at residues 306–378 (AVQAEDFDDM…ADQPADCKQQ (73 aa)) is disordered. Residues 308 to 344 (QAEDFDDMEDDEEDDEDDDEDEEEEEEDEDEDEDDEE) are compositionally biased toward acidic residues. Positions 348–352 (KPKKK) match the Nuclear localization signal motif. Over residues 356-378 (KPKLPSKGGAQGGADQPADCKQQ) the composition is skewed to low complexity. C375 carries the cysteine methyl ester modification. C375 carries the S-farnesyl cysteine lipid modification. Residues 376–378 (KQQ) constitute a propeptide, removed in mature form.

It belongs to the nucleosome assembly protein (NAP) family.

Its subcellular location is the nucleus. The protein resides in the cytoplasm. In terms of biological role, may modulate chromatin structure by regulation of nucleosome assembly/disassembly. The sequence is that of Nucleosome assembly protein 1;1 (NAP1;1) from Oryza sativa subsp. japonica (Rice).